Here is a 394-residue protein sequence, read N- to C-terminus: Elongation factor Tu (394 aa).

Residues 10–204 form the tr-type G domain; sequence KPHVNVGTIG…HLDNYIPEPE (195 aa). Positions 19–26 are G1; that stretch reads GHVDHGKT. 19-26 serves as a coordination point for GTP; the sequence is GHVDHGKT. A Mg(2+)-binding site is contributed by threonine 26. Residues 60–64 form a G2 region; that stretch reads GITIN. A G3 region spans residues 81-84; it reads DCPG. Residues 81-85 and 136-139 each bind GTP; these read DCPGH and NKCD. Residues 136–139 are G4; that stretch reads NKCD. Positions 174 to 176 are G5; sequence SAL.

It belongs to the TRAFAC class translation factor GTPase superfamily. Classic translation factor GTPase family. EF-Tu/EF-1A subfamily. As to quaternary structure, monomer.

It localises to the cytoplasm. It catalyses the reaction GTP + H2O = GDP + phosphate + H(+). GTP hydrolase that promotes the GTP-dependent binding of aminoacyl-tRNA to the A-site of ribosomes during protein biosynthesis. The protein is Elongation factor Tu of Histophilus somni (strain 129Pt) (Haemophilus somnus).